We begin with the raw amino-acid sequence, 493 residues long: BICD family-like cargo adapter 2 (493 aa).

Coiled-coil stretches lie at residues 56–275 (ELGK…ELHM) and 365–431 (MQHV…LLST).

It belongs to the BICDR family.

The sequence is that of BICD family-like cargo adapter 2 (bicdl2) from Xenopus laevis (African clawed frog).